A 208-amino-acid polypeptide reads, in one-letter code: Phomoidride biosynthesis cluster protein B (208 aa).

The protein belongs to the tstB family.

Its function is as follows. Phosphatidylethanolamine-binding protein; part of the gene cluster that mediates the biosynthesis of the antihypercholesterolemic agents phomoidrides which are dimeric anhydrides. Within the pathway, phiB is not essential for dimerization and its function has still to be determined. The pathway begins with the highly reducing polyketide synthase phiA that catalyzes the formation of a C12-fatty acyl-ACP, starting from one acetate and 5 malonate units. The hydrolase phiM is involved in the release of the C12-fatty acyl chain from phiA. The alkylcitrate synthase (ACS) phiJ and the alkylcitrate dehydratase (ACDH) phiI then give rise to decarboxylated monomeric anhydrides by coupling the C12-fatty acyl chain with oxalacetic acid. The cyclase phiC is responsible for the dimerization of the monomeric anhydrides which leads to the production of prephomoidride that contains the characteristic bicyclo[4.3.1]deca-1,6-diene system of phomoidrides. Iterative oxidation catalyzed by the alpha-ketoglutarate-dependent dioxygenase phiK produced then phomoidride A. Finally, the methyltransferase phiE converts phomoidride A to phomoidride B via an acetalization reaction. The phosphatidylethanolamine-binding protein phiB and phiN are not essential for dimerization and their functions have still to be determined. This is Phomoidride biosynthesis cluster protein B from Fungal sp. (strain ATCC 74256).